The following is a 251-amino-acid chain: Ditrans,polycis-undecaprenyl-diphosphate synthase ((2E,6E)-farnesyl-diphosphate specific) (251 aa).

Asp-21 is an active-site residue. Residue Asp-21 coordinates Mg(2+). Residues 22–25 (GNNR), Trp-26, His-38, and 66–68 (SSE) contribute to the substrate site. Catalysis depends on Asn-69, which acts as the Proton acceptor. Residues Trp-70, Arg-72, Arg-189, and 195-197 (RIS) each bind substrate. Mg(2+) is bound at residue Glu-208.

It belongs to the UPP synthase family. As to quaternary structure, homodimer. It depends on Mg(2+) as a cofactor.

It catalyses the reaction 8 isopentenyl diphosphate + (2E,6E)-farnesyl diphosphate = di-trans,octa-cis-undecaprenyl diphosphate + 8 diphosphate. Its function is as follows. Catalyzes the sequential condensation of isopentenyl diphosphate (IPP) with (2E,6E)-farnesyl diphosphate (E,E-FPP) to yield (2Z,6Z,10Z,14Z,18Z,22Z,26Z,30Z,34E,38E)-undecaprenyl diphosphate (di-trans,octa-cis-UPP). UPP is the precursor of glycosyl carrier lipid in the biosynthesis of bacterial cell wall polysaccharide components such as peptidoglycan and lipopolysaccharide. This Pseudomonas syringae pv. tomato (strain ATCC BAA-871 / DC3000) protein is Ditrans,polycis-undecaprenyl-diphosphate synthase ((2E,6E)-farnesyl-diphosphate specific).